We begin with the raw amino-acid sequence, 238 residues long: Ribonuclease PH (238 aa).

Residues R86 and 124–126 (GTR) each bind phosphate.

The protein belongs to the RNase PH family. As to quaternary structure, homohexameric ring arranged as a trimer of dimers.

The enzyme catalyses tRNA(n+1) + phosphate = tRNA(n) + a ribonucleoside 5'-diphosphate. Functionally, phosphorolytic 3'-5' exoribonuclease that plays an important role in tRNA 3'-end maturation. Removes nucleotide residues following the 3'-CCA terminus of tRNAs; can also add nucleotides to the ends of RNA molecules by using nucleoside diphosphates as substrates, but this may not be physiologically important. Probably plays a role in initiation of 16S rRNA degradation (leading to ribosome degradation) during starvation. The sequence is that of Ribonuclease PH from Brucella melitensis biotype 2 (strain ATCC 23457).